Reading from the N-terminus, the 260-residue chain is uncharacterized protein (260 aa).

This is an uncharacterized protein from Aquifex aeolicus (strain VF5).